Reading from the N-terminus, the 267-residue chain is MNMSVLTLQEYEFEKQFNENEAIQWMQENWKKSFLFSALYAAFIFGGRHLMNKRAKFELRKPLVLWSLTLAVFSIFGALRTGAYMLYILMTKGLKQSVCDQSFYNGPVSKFWAYAFVLSKAPELGDTIFIILRKQKLIFLHWYHHITVLLYSWYSYKDMVAGGGWFMTMNYGVHAVMYSYYALRAAGFRVSRKFAMFITLSQITQMLMGCVINYLVFNWMQHDNDQCYSHFQNIFWSSLMYLSYLLLFCHFFFEAYIGKVKKATKAE.

A glycan (N-linked (GlcNAc...) asparagine) is linked at asparagine 2. Helical transmembrane passes span 34–51, 70–90, 111–131, 136–156, 159–179, 197–217, and 234–254; these read FLFSALYAAFIFGGRHLM, LAVFSIFGALRTGAYMLYILM, FWAYAFVLSKAPELGDTIFII, KLIFLHWYHHITVLLYSWYSY, MVAGGGWFMTMNYGVHAVMYS, FITLSQITQMLMGCVINYLVF, and IFWSSLMYLSYLLLFCHFFFE.

The protein belongs to the ELO family. ELOVL6 subfamily. In terms of processing, N-Glycosylated. In terms of tissue distribution, expressed in liver and barely in brain.

The protein resides in the endoplasmic reticulum membrane. It carries out the reaction a very-long-chain acyl-CoA + malonyl-CoA + H(+) = a very-long-chain 3-oxoacyl-CoA + CO2 + CoA. The catalysed reaction is hexadecanoyl-CoA + malonyl-CoA + H(+) = 3-oxooctadecanoyl-CoA + CO2 + CoA. It catalyses the reaction (9Z)-hexadecenoyl-CoA + malonyl-CoA + H(+) = 3-oxo-(11Z)-octadecenoyl-CoA + CO2 + CoA. The enzyme catalyses dodecanoyl-CoA + malonyl-CoA + H(+) = 3-oxotetradecanoyl-CoA + CO2 + CoA. It carries out the reaction tetradecanoyl-CoA + malonyl-CoA + H(+) = 3-oxohexadecanoyl-CoA + CO2 + CoA. The catalysed reaction is (9Z)-octadecenoyl-CoA + malonyl-CoA + H(+) = 3-oxo-(11Z)-eicosenoyl-CoA + CO2 + CoA. It catalyses the reaction (9Z,12Z)-octadecadienoyl-CoA + malonyl-CoA + H(+) = (11Z,14Z)-3-oxoicosa-11,14-dienoyl-CoA + CO2 + CoA. The enzyme catalyses (9Z,12Z,15Z)-octadecatrienoyl-CoA + malonyl-CoA + H(+) = (11Z,14Z,17Z)-3-oxoeicosatrienoyl-CoA + CO2 + CoA. The protein operates within lipid metabolism; fatty acid biosynthesis. The reaction is stimulated by the presence of HSD17B12, the enzyme catalyzing the second step of the elongation cycle. Its function is as follows. Catalyzes the first and rate-limiting reaction of the four reactions that constitute the long-chain fatty acids elongation cycle. This endoplasmic reticulum-bound enzymatic process allows the addition of 2 carbons to the chain of long- and very long-chain fatty acids (VLCFAs) per cycle. Condensing enzyme that elongates fatty acids with 12, 14 and 16 carbons with higher activity toward C16:0 acyl-CoAs. Catalyzes the synthesis of unsaturated C16 long chain fatty acids and, to a lesser extent, C18:0 and those with low desaturation degree. May participate in the production of saturated and monounsaturated VLCFAs of different chain lengths that are involved in multiple biological processes as precursors of membrane lipids and lipid mediators. In Rattus norvegicus (Rat), this protein is Very long chain fatty acid elongase 6.